The sequence spans 495 residues: Cytochrome P450 monooxygenase FrzC (495 aa).

Residues 8–28 traverse the membrane as a helical segment; sequence GLVVGLWVTYHILLGTYNVFF. Cys-437 lines the heme pocket.

The protein belongs to the cytochrome P450 family. The cofactor is heme.

Its subcellular location is the membrane. The enzyme catalyses (S,S)-2,5-di-(p-hydroxybenzyl)piperazine + reduced [NADPH--hemoprotein reductase] + O2 = (1S,4S)-4-[(4-hydroxyphenyl)methyl]-2,5-diazaspiro[bicyclo[3.2.1]octane-6,1'-cyclohexane]-2',5'-dien-4'-one + oxidized [NADPH--hemoprotein reductase] + 2 H2O + H(+). It functions in the pathway secondary metabolite biosynthesis. Its function is as follows. Cytochrome P450 monooxygenase; part of the gene cluster that mediates the biosynthesis of the alkaloid (-)-FR901483, a potent immunosuppressant that shows efficacy in animal models and a probable inhibitor of purine nucleotide biosynthesis by targeting phosphoribosylpyrophosphate amidotransferase (PPAT). Within the pathway, FrzC catalyzes the coupling between N10 and C1' to produce a 1,4-diazabicyclo[3.2.1]octane spiro-fused to a 2,5-cyclohexadienone. FrzC probably first catalyzes homolysis of the N-H bond to generate the N10 radical which is followed by an O-H abstraction to give the phenolic radical which can be delocalized to C1'. Radical coupling between N10 and C1' then forms. The biosynthesis of (-)-FR901483 starts with the condensation of two L-tyrosines to yield (S,S)-dityrosyl-piperazine. This process occurs in 3 steps with the non-canonical nonribosomal peptide synthetase FrzA catalyzing the reduction of L-tyrosine into L-tyrosinal, the spontaneous condensation of 2 L-tyrosinal units, and the subsequent reduction by the NmrA-like family domain-containing oxidoreductase FrzB. The cytochrome P450 monooxygenase FrzC then performs coupling between N10 and C1' to morph the piperazine into a 1,4-diazabicyclo[3.2.1]octane spiro-fused to a 2,5-cyclohexadienone. The dienone portion is further reduced to cyclohexanone by the flavin-dependent reductase FrzD. The methyltranserases (MTs) FrzE and FrzF are then involved in the methylation at the C10' amine and the C4 phenolic oxygen, respectively. The order of the two MTs appear to be interchangeable. Cleavage of the C9-N10' bond by the dioxygenase FrzG then leads to formation of a conjugated iminium. In addition to the oxidation of C9, an additional dehydrogenation between C7 and C8 can occur to give a likely shunt product. The next biosynthetic step is the intramolecular aldol condensation catalyzed by the newly identified aldolase FrzH to yield an aza-tricyclic product with the formation of a C9-C3' bond. The short-chain dehydrogenase/reductase FrzI then produces dephospho-(-)-FR901483 that is phosphorylated at C4'-OH into (-)-FR901483 by the phosphotransferase FrzJ. This is Cytochrome P450 monooxygenase FrzC from Cladobotryum sp.